The primary structure comprises 436 residues: Eukaryotic translation initiation factor 5 (436 aa).

Position 27–34 (27–34 (GKGNGIKT)) interacts with GTP. The tract at residues 177–203 (NSDKGSSNDDDDDDWEPEPVEPNGMLS) is disordered. The segment covering 184–195 (NDDDDDDWEPEP) has biased composition (acidic residues). The W2 domain occupies 216 to 379 (EKSEEQRLDM…KEAEEETEEE (164 aa)). Basic and acidic residues predominate over residues 396–408 (LRQQKEKAAREAQ). The interval 396-436 (LRQQKEKAAREAQQKSAKATNGNAAAASGANDEEDLDIDDI) is disordered. The span at 409-425 (QKSAKATNGNAAAASGA) shows a compositional bias: low complexity. Over residues 426–436 (NDEEDLDIDDI) the composition is skewed to acidic residues.

The protein belongs to the eIF-2-beta/eIF-5 family.

Its function is as follows. Catalyzes the hydrolysis of GTP bound to the 40S ribosomal initiation complex (40S.mRNA.Met-tRNA[F].eIF-2.GTP) with the subsequent joining of a 60S ribosomal subunit resulting in the release of eIF-2 and the guanine nucleotide. The subsequent joining of a 60S ribosomal subunit results in the formation of a functional 80S initiation complex (80S.mRNA.Met-tRNA[F]). This chain is Eukaryotic translation initiation factor 5, found in Caenorhabditis elegans.